Consider the following 444-residue polypeptide: ATP-dependent protease ATPase subunit HslU (444 aa).

ATP is bound by residues I18, 60–65 (GVGKTE), D256, E322, and R394.

The protein belongs to the ClpX chaperone family. HslU subfamily. A double ring-shaped homohexamer of HslV is capped on each side by a ring-shaped HslU homohexamer. The assembly of the HslU/HslV complex is dependent on binding of ATP.

The protein resides in the cytoplasm. In terms of biological role, ATPase subunit of a proteasome-like degradation complex; this subunit has chaperone activity. The binding of ATP and its subsequent hydrolysis by HslU are essential for unfolding of protein substrates subsequently hydrolyzed by HslV. HslU recognizes the N-terminal part of its protein substrates and unfolds these before they are guided to HslV for hydrolysis. This Buchnera aphidicola subsp. Cinara cedri (strain Cc) protein is ATP-dependent protease ATPase subunit HslU.